The sequence spans 166 residues: Small heat shock protein OV25-2 (166 aa).

In terms of domain architecture, sHSP spans 38-149 (LNECNIGNSL…ASRNIPIRAS (112 aa)). The interval 140–166 (ASRNIPIRASPKEPEANQKSAINDAKQ) is disordered.

Belongs to the small heat shock protein (HSP20) family.

The protein is Small heat shock protein OV25-2 (OV25-2) of Onchocerca volvulus.